Reading from the N-terminus, the 30-residue chain is Basic phospholipase A2 CM-I (30 aa).

This sequence belongs to the phospholipase A2 family. Group I subfamily. Ca(2+) serves as cofactor. As to expression, expressed by the venom gland.

It localises to the secreted. It carries out the reaction a 1,2-diacyl-sn-glycero-3-phosphocholine + H2O = a 1-acyl-sn-glycero-3-phosphocholine + a fatty acid + H(+). Functionally, snake venom phospholipase A2 (PLA2) that shows weak anticoagulant activity. Is more catalytically active than the strong anticoagulant protein CM-IV found in this venom. Acts by inhibiting the complex composed of tissue factor (F3) and coagulation factor VIIa (F7) (TF-VIIa complex) by only enzymatic mechanism. PLA2 catalyzes the calcium-dependent hydrolysis of the 2-acyl groups in 3-sn-phosphoglycerides. This chain is Basic phospholipase A2 CM-I, found in Naja nigricollis (Black-necked spitting cobra).